A 149-amino-acid polypeptide reads, in one-letter code: Nucleoside diphosphate kinase (149 aa).

The ATP site is built by Lys-9, Phe-57, Arg-85, Thr-91, Arg-102, and Asn-112. The active-site Pros-phosphohistidine intermediate is His-115.

It belongs to the NDK family. In terms of assembly, homotetramer. Mg(2+) is required as a cofactor.

The protein localises to the cytoplasm. The enzyme catalyses a 2'-deoxyribonucleoside 5'-diphosphate + ATP = a 2'-deoxyribonucleoside 5'-triphosphate + ADP. It carries out the reaction a ribonucleoside 5'-diphosphate + ATP = a ribonucleoside 5'-triphosphate + ADP. Functionally, major role in the synthesis of nucleoside triphosphates other than ATP. The ATP gamma phosphate is transferred to the NDP beta phosphate via a ping-pong mechanism, using a phosphorylated active-site intermediate. This Desulfitobacterium hafniense (strain DSM 10664 / DCB-2) protein is Nucleoside diphosphate kinase.